Consider the following 83-residue polypeptide: Cytochrome c oxidase subunit 7A2, mitochondrial (83 aa).

Residues Met-1–His-23 constitute a mitochondrion transit peptide. At Phe-24–Gly-48 the chain is on the mitochondrial matrix side. Lys-33 is subject to N6-acetyllysine. Residues Thr-49–Ala-77 form a helical membrane-spanning segment. The Mitochondrial intermembrane portion of the chain corresponds to Phe-78 to Asn-83.

This sequence belongs to the cytochrome c oxidase VIIa family. In terms of assembly, component of the cytochrome c oxidase (complex IV, CIV), a multisubunit enzyme composed of 14 subunits. The complex is composed of a catalytic core of 3 subunits MT-CO1, MT-CO2 and MT-CO3, encoded in the mitochondrial DNA, and 11 supernumerary subunits COX4I, COX5A, COX5B, COX6A, COX6B, COX6C, COX7A, COX7B, COX7C, COX8 and NDUFA4, which are encoded in the nuclear genome. The complex exists as a monomer or a dimer and forms supercomplexes (SCs) in the inner mitochondrial membrane with NADH-ubiquinone oxidoreductase (complex I, CI) and ubiquinol-cytochrome c oxidoreductase (cytochrome b-c1 complex, complex III, CIII), resulting in different assemblies (supercomplex SCI(1)III(2)IV(1) and megacomplex MCI(2)III(2)IV(2)). Interacts with PET100.

The protein resides in the mitochondrion inner membrane. It participates in energy metabolism; oxidative phosphorylation. Its function is as follows. Component of the cytochrome c oxidase, the last enzyme in the mitochondrial electron transport chain which drives oxidative phosphorylation. The respiratory chain contains 3 multisubunit complexes succinate dehydrogenase (complex II, CII), ubiquinol-cytochrome c oxidoreductase (cytochrome b-c1 complex, complex III, CIII) and cytochrome c oxidase (complex IV, CIV), that cooperate to transfer electrons derived from NADH and succinate to molecular oxygen, creating an electrochemical gradient over the inner membrane that drives transmembrane transport and the ATP synthase. Cytochrome c oxidase is the component of the respiratory chain that catalyzes the reduction of oxygen to water. Electrons originating from reduced cytochrome c in the intermembrane space (IMS) are transferred via the dinuclear copper A center (CU(A)) of subunit 2 and heme A of subunit 1 to the active site in subunit 1, a binuclear center (BNC) formed by heme A3 and copper B (CU(B)). The BNC reduces molecular oxygen to 2 water molecules using 4 electrons from cytochrome c in the IMS and 4 protons from the mitochondrial matrix. This is Cytochrome c oxidase subunit 7A2, mitochondrial (Cox7a2) from Rattus norvegicus (Rat).